We begin with the raw amino-acid sequence, 90 residues long: Progonadoliberin-3 (90 aa).

The signal sequence occupies residues 1-23 (MEAGSRVIMQVLLLALVVQVTLS). A Pyrrolidone carboxylic acid modification is found at Gln-24. Position 33 is a glycine amide (Gly-33).

It belongs to the GnRH family. In terms of tissue distribution, expressed only in the terminal nerve nucleus of the telencephalon.

Its subcellular location is the secreted. In terms of biological role, stimulates the secretion of gonadotropins. In Haplochromis burtoni (Burton's mouthbrooder), this protein is Progonadoliberin-3 (gnrh3).